We begin with the raw amino-acid sequence, 284 residues long: Bifunctional protein FolD (284 aa).

NADP(+)-binding positions include G164–S166 and S189.

This sequence belongs to the tetrahydrofolate dehydrogenase/cyclohydrolase family. As to quaternary structure, homodimer.

The enzyme catalyses (6R)-5,10-methylene-5,6,7,8-tetrahydrofolate + NADP(+) = (6R)-5,10-methenyltetrahydrofolate + NADPH. It catalyses the reaction (6R)-5,10-methenyltetrahydrofolate + H2O = (6R)-10-formyltetrahydrofolate + H(+). It functions in the pathway one-carbon metabolism; tetrahydrofolate interconversion. Functionally, catalyzes the oxidation of 5,10-methylenetetrahydrofolate to 5,10-methenyltetrahydrofolate and then the hydrolysis of 5,10-methenyltetrahydrofolate to 10-formyltetrahydrofolate. In Listeria monocytogenes serotype 4b (strain F2365), this protein is Bifunctional protein FolD.